Here is a 263-residue protein sequence, read N- to C-terminus: Thymidylate kinase (263 aa).

A mitochondrion-targeting transit peptide spans 1-51 (MKRICSVSSVQLFSRSFRALASPRSLNYPLQCIKRSSVRMESSNFSSGVRT). Position 66-74 (66-74 (GLDRSGKST)) interacts with ATP.

Belongs to the thymidylate kinase family. As to expression, expressed in root, rosette leaves, flower buds, flowers and siliques.

The protein localises to the mitochondrion. It localises to the cytoplasm. It is found in the nucleus. Its subcellular location is the nucleoplasm. The enzyme catalyses dTMP + ATP = dTDP + ADP. It functions in the pathway pyrimidine metabolism; dTTP biosynthesis. Functionally, catalyzes the conversion of dTMP to dTDP. Involved in the regulation of DNA replication. Is essential to promote the first division of the zygote. The chain is Thymidylate kinase from Arabidopsis thaliana (Mouse-ear cress).